We begin with the raw amino-acid sequence, 621 residues long: Glutathione-regulated potassium-efflux system protein KefC (621 aa).

Transmembrane regions (helical) follow at residues 4-24 (HTLI…PVAV), 26-46 (LGLG…PWGF), 54-74 (SILH…GLEL), 90-110 (GALQ…LLGM), 114-134 (VAEL…MQAM), 151-171 (VLLF…LLAV), 178-198 (LGAF…VILL), 218-238 (VFSA…EEAG), 270-290 (GLLL…GTLV), 294-314 (LRIL…LWLI), 327-347 (WFAV…GAAQ), and 359-379 (ALTL…VLLT). The region spanning 399–518 (QPRVIIAGFG…AGVETPERET (120 aa)) is the RCK N-terminal domain. The segment at 591–621 (LSLTQRHGWQGTEEGKHTGDPRDEPESKPTV) is disordered. Residues 603–621 (EEGKHTGDPRDEPESKPTV) are compositionally biased toward basic and acidic residues.

It belongs to the monovalent cation:proton antiporter 2 (CPA2) transporter (TC 2.A.37) family. KefC subfamily. As to quaternary structure, homodimer. Interacts with the regulatory subunit KefF.

It is found in the cell inner membrane. Functionally, pore-forming subunit of a potassium efflux system that confers protection against electrophiles. Catalyzes K(+)/H(+) antiport. The sequence is that of Glutathione-regulated potassium-efflux system protein KefC from Enterobacter sp. (strain 638).